A 312-amino-acid chain; its full sequence is UDP-N-acetylenolpyruvoylglucosamine reductase (312 aa).

The FAD-binding PCMH-type domain occupies 30 to 202; that stretch reads RVGGPAQWLA…VAAQFQLEPG (173 aa). The active site involves arginine 181. Serine 232 (proton donor) is an active-site residue. The active site involves glutamate 302.

This sequence belongs to the MurB family. FAD is required as a cofactor.

It localises to the cytoplasm. The catalysed reaction is UDP-N-acetyl-alpha-D-muramate + NADP(+) = UDP-N-acetyl-3-O-(1-carboxyvinyl)-alpha-D-glucosamine + NADPH + H(+). It participates in cell wall biogenesis; peptidoglycan biosynthesis. Its function is as follows. Cell wall formation. In Synechococcus sp. (strain CC9311), this protein is UDP-N-acetylenolpyruvoylglucosamine reductase.